We begin with the raw amino-acid sequence, 453 residues long: UDP-N-acetylmuramoylalanine--D-glutamate ligase (453 aa).

Residue 115-121 (GTNGKTT) coordinates ATP.

This sequence belongs to the MurCDEF family.

Its subcellular location is the cytoplasm. It catalyses the reaction UDP-N-acetyl-alpha-D-muramoyl-L-alanine + D-glutamate + ATP = UDP-N-acetyl-alpha-D-muramoyl-L-alanyl-D-glutamate + ADP + phosphate + H(+). It participates in cell wall biogenesis; peptidoglycan biosynthesis. Cell wall formation. Catalyzes the addition of glutamate to the nucleotide precursor UDP-N-acetylmuramoyl-L-alanine (UMA). The polypeptide is UDP-N-acetylmuramoylalanine--D-glutamate ligase (Geotalea uraniireducens (strain Rf4) (Geobacter uraniireducens)).